The following is a 463-amino-acid chain: Fumarate hydratase class II (463 aa).

Substrate contacts are provided by residues 95–97 (SGT), 126–129 (HPND), 136–138 (SSN), and Thr-184. Catalysis depends on His-185, which acts as the Proton donor/acceptor. Ser-315 is an active-site residue. Residues Ser-316 and 321 to 323 (KIN) each bind substrate.

This sequence belongs to the class-II fumarase/aspartase family. Fumarase subfamily. As to quaternary structure, homotetramer.

The protein resides in the cytoplasm. The enzyme catalyses (S)-malate = fumarate + H2O. Its pathway is carbohydrate metabolism; tricarboxylic acid cycle; (S)-malate from fumarate: step 1/1. Involved in the TCA cycle. Catalyzes the stereospecific interconversion of fumarate to L-malate. The polypeptide is Fumarate hydratase class II (Chlamydia trachomatis serovar D (strain ATCC VR-885 / DSM 19411 / UW-3/Cx)).